An 89-amino-acid chain; its full sequence is Small ribosomal subunit protein bS20 (89 aa).

It belongs to the bacterial ribosomal protein bS20 family.

Binds directly to 16S ribosomal RNA. The polypeptide is Small ribosomal subunit protein bS20 (Helicobacter pylori (strain Shi470)).